We begin with the raw amino-acid sequence, 432 residues long: Transcriptional adapter 3 (432 aa).

Lys21 is covalently cross-linked (Glycyl lysine isopeptide (Lys-Gly) (interchain with G-Cter in SUMO2)). Positions 40-69 (IEELDTLQLELETLLSSASRRLRVLEAETQ) form a coiled coil. The disordered stretch occupies residues 87-127 (GRDHELGAPPKHGKPKKQKLEGKTGHGPGPGPGRPKSKNVQ). Residue Lys129 forms a Glycyl lysine isopeptide (Lys-Gly) (interchain with G-Cter in SUMO2) linkage. The tract at residues 272-319 (NIISPMEDSPIPDMSGKESGADGASTSPRNQNKPFSVPHTKSLESRIK) is disordered. Residues Ser280 and Ser298 each carry the phosphoserine modification. Positions 295–305 (ASTSPRNQNKP) are enriched in polar residues. The stretch at 367-407 (LLRLAKEEVSRQELRQRVRMADNEVMDAFRKIMAARQKKRT) forms a coiled coil. At Lys418 the chain carries N6-acetyllysine.

Belongs to the NGG1 family. In terms of assembly, the PCAF complex is composed of a number of TBP-associated factors (TAFS), such as TAF5, TAF5L, TAF6, TAF6L, TAF9, TAF10 and TAF12, PCAF, and also PCAF-associated factors (PAFs), such as TADA2L/ADA2, TADA3L/ADA3 and SPT3. Interacts directly with TADA2L and PCAF and also with the high-risk HPV oncoprotein E6. Component of the STAGA transcription coactivator-HAT complex, at least composed of SUPT3H, GCN5L2, TAF5L, TAF6L, SUPT7L, TADA3L, TAD1L, TAF10, TAF12, TRRAP and TAF9. Component of the TFTC-HAT complex. Component of the ADA2A-containing complex (ATAC), composed of KAT14, KAT2A, TADA2L, TADA3L, ZZ3, MBIP, WDR5, YEATS2, CCDC101 and DR1.

Its subcellular location is the nucleus. Functionally, functions as a component of the PCAF complex. The PCAF complex is capable of efficiently acetylating histones in a nucleosomal context. The PCAF complex could be considered as the human version of the yeast SAGA complex. Also known as a coactivator for p53/TP53-dependent transcriptional activation. Component of the ATAC complex, a complex with histone acetyltransferase activity on histones H3 and H4. This Mus musculus (Mouse) protein is Transcriptional adapter 3 (Tada3).